Reading from the N-terminus, the 399-residue chain is Elongation factor Tu (399 aa).

One can recognise a tr-type G domain in the interval 10–209; that stretch reads KPHVNIGTIG…EVDAYIPTPV (200 aa). Residues 19–26 are G1; the sequence is GHVDHGKT. 19-26 provides a ligand contact to GTP; sequence GHVDHGKT. T26 serves as a coordination point for Mg(2+). The segment at 60-64 is G2; that stretch reads GITIA. The tract at residues 81–84 is G3; sequence DCPG. GTP is bound by residues 81 to 85 and 136 to 139; these read DCPGH and NKQD. The segment at 136-139 is G4; sequence NKQD. A G5 region spans residues 174-176; it reads SAL.

Belongs to the TRAFAC class translation factor GTPase superfamily. Classic translation factor GTPase family. EF-Tu/EF-1A subfamily. As to quaternary structure, monomer.

The protein localises to the cytoplasm. The catalysed reaction is GTP + H2O = GDP + phosphate + H(+). GTP hydrolase that promotes the GTP-dependent binding of aminoacyl-tRNA to the A-site of ribosomes during protein biosynthesis. The protein is Elongation factor Tu of Helicobacter acinonychis (strain Sheeba).